The sequence spans 200 residues: Small ribosomal subunit protein uS2 (200 aa).

This sequence belongs to the universal ribosomal protein uS2 family.

This is Small ribosomal subunit protein uS2 from Picrophilus torridus (strain ATCC 700027 / DSM 9790 / JCM 10055 / NBRC 100828 / KAW 2/3).